A 104-amino-acid polypeptide reads, in one-letter code: Large ribosomal subunit protein bL21 (104 aa).

It belongs to the bacterial ribosomal protein bL21 family. As to quaternary structure, part of the 50S ribosomal subunit. Contacts protein L20.

In terms of biological role, this protein binds to 23S rRNA in the presence of protein L20. This is Large ribosomal subunit protein bL21 from Gluconacetobacter diazotrophicus (strain ATCC 49037 / DSM 5601 / CCUG 37298 / CIP 103539 / LMG 7603 / PAl5).